A 461-amino-acid polypeptide reads, in one-letter code: Porin AaxA (461 aa).

The N-terminal stretch at 1–22 is a signal peptide; sequence MSFRSVLLTALLSLSFTTTMQA.

It belongs to the OprB family.

The protein resides in the cell outer membrane. Facilitates L-arginine uptake, as part of the AaxABC system. The arginine uptake by the bacterium in the macrophage may be a virulence factor against the host innate immune response. The sequence is that of Porin AaxA (aaxA) from Chlamydia trachomatis serovar L2 (strain ATCC VR-902B / DSM 19102 / 434/Bu).